A 627-amino-acid polypeptide reads, in one-letter code: Pheromone B alpha 2 receptor (627 aa).

Residues M1 to P7 lie on the Extracellular side of the membrane. The helical transmembrane segment at A8–L28 threads the bilayer. Topologically, residues Q29–T35 are cytoplasmic. The chain crosses the membrane as a helical span at residues C36–W56. Over K57 to E69 the chain is Extracellular. A helical membrane pass occupies residues I70–V90. Topologically, residues R91–A102 are cytoplasmic. Residues V103–V123 form a helical membrane-spanning segment. The Extracellular portion of the chain corresponds to V124–L150. A helical membrane pass occupies residues T151–I171. Over Q172–R197 the chain is Cytoplasmic. Residues L198–I218 traverse the membrane as a helical segment. Residues L219–Y260 lie on the Extracellular side of the membrane. Residues E261–A281 traverse the membrane as a helical segment. Topologically, residues Q282–V627 are cytoplasmic. Disordered stretches follow at residues L363 to I405, T479 to A505, and L518 to V627. Residues S372 to S387 show a composition bias toward low complexity. 2 stretches are compositionally biased toward polar residues: residues P519–T533 and S545–M555. The segment covering A569 to A607 has biased composition (low complexity).

It belongs to the G-protein coupled receptor 4 family.

It is found in the cell membrane. Functionally, receptor for the BAP2 pheromone, a prenylated mating factor. The receptor/pheromone interaction may have a role in the fusion of clamp cells. This Schizophyllum commune (Split gill fungus) protein is Pheromone B alpha 2 receptor (BAR2).